We begin with the raw amino-acid sequence, 585 residues long: Urease subunit alpha (585 aa).

Positions 132-585 constitute a Urease domain; that stretch reads GGIDTHIHFI…LPMAQRYFLF (454 aa). Ni(2+) contacts are provided by His-137, His-139, and Lys-220. Lys-220 bears the N6-carboxylysine mark. His-222 lines the substrate pocket. Ni(2+)-binding residues include His-249 and His-275. His-323 serves as the catalytic Proton donor. Asp-363 lines the Ni(2+) pocket.

The protein belongs to the metallo-dependent hydrolases superfamily. Urease alpha subunit family. As to quaternary structure, heterotrimer of UreA (gamma), UreB (beta) and UreC (alpha) subunits. Three heterotrimers associate to form the active enzyme. Ni cation serves as cofactor. Carboxylation allows a single lysine to coordinate two nickel ions.

The protein resides in the cytoplasm. It carries out the reaction urea + 2 H2O + H(+) = hydrogencarbonate + 2 NH4(+). It functions in the pathway nitrogen metabolism; urea degradation; CO(2) and NH(3) from urea (urease route): step 1/1. The sequence is that of Urease subunit alpha from Pseudarthrobacter chlorophenolicus (strain ATCC 700700 / DSM 12829 / CIP 107037 / JCM 12360 / KCTC 9906 / NCIMB 13794 / A6) (Arthrobacter chlorophenolicus).